The sequence spans 156 residues: 6,7-dimethyl-8-ribityllumazine synthase (156 aa).

5-amino-6-(D-ribitylamino)uracil contacts are provided by residues phenylalanine 25, alanine 59–glutamate 61, and alanine 83–isoleucine 85. (2S)-2-hydroxy-3-oxobutyl phosphate is bound at residue alanine 88–threonine 89. Histidine 91 functions as the Proton donor in the catalytic mechanism. Phenylalanine 116 lines the 5-amino-6-(D-ribitylamino)uracil pocket. Arginine 130 lines the (2S)-2-hydroxy-3-oxobutyl phosphate pocket.

This sequence belongs to the DMRL synthase family.

It catalyses the reaction (2S)-2-hydroxy-3-oxobutyl phosphate + 5-amino-6-(D-ribitylamino)uracil = 6,7-dimethyl-8-(1-D-ribityl)lumazine + phosphate + 2 H2O + H(+). It participates in cofactor biosynthesis; riboflavin biosynthesis; riboflavin from 2-hydroxy-3-oxobutyl phosphate and 5-amino-6-(D-ribitylamino)uracil: step 1/2. Its function is as follows. Catalyzes the formation of 6,7-dimethyl-8-ribityllumazine by condensation of 5-amino-6-(D-ribitylamino)uracil with 3,4-dihydroxy-2-butanone 4-phosphate. This is the penultimate step in the biosynthesis of riboflavin. The chain is 6,7-dimethyl-8-ribityllumazine synthase from Nitratidesulfovibrio vulgaris (strain ATCC 29579 / DSM 644 / CCUG 34227 / NCIMB 8303 / VKM B-1760 / Hildenborough) (Desulfovibrio vulgaris).